Here is a 68-residue protein sequence, read N- to C-terminus: UPF0253 protein AHA_2115 (68 aa).

It belongs to the UPF0253 family.

The sequence is that of UPF0253 protein AHA_2115 from Aeromonas hydrophila subsp. hydrophila (strain ATCC 7966 / DSM 30187 / BCRC 13018 / CCUG 14551 / JCM 1027 / KCTC 2358 / NCIMB 9240 / NCTC 8049).